The chain runs to 213 residues: Phosphatidylserine decarboxylase proenzyme (213 aa).

Serine 182 serves as the catalytic Schiff-base intermediate with substrate; via pyruvic acid. Serine 182 bears the Pyruvic acid (Ser); by autocatalysis mark.

This sequence belongs to the phosphatidylserine decarboxylase family. PSD-A subfamily. Heterodimer of a large membrane-associated beta subunit and a small pyruvoyl-containing alpha subunit. It depends on pyruvate as a cofactor. Is synthesized initially as an inactive proenzyme. Formation of the active enzyme involves a self-maturation process in which the active site pyruvoyl group is generated from an internal serine residue via an autocatalytic post-translational modification. Two non-identical subunits are generated from the proenzyme in this reaction, and the pyruvate is formed at the N-terminus of the alpha chain, which is derived from the carboxyl end of the proenzyme. The post-translation cleavage follows an unusual pathway, termed non-hydrolytic serinolysis, in which the side chain hydroxyl group of the serine supplies its oxygen atom to form the C-terminus of the beta chain, while the remainder of the serine residue undergoes an oxidative deamination to produce ammonia and the pyruvoyl prosthetic group on the alpha chain.

Its subcellular location is the cell membrane. It carries out the reaction a 1,2-diacyl-sn-glycero-3-phospho-L-serine + H(+) = a 1,2-diacyl-sn-glycero-3-phosphoethanolamine + CO2. The protein operates within phospholipid metabolism; phosphatidylethanolamine biosynthesis; phosphatidylethanolamine from CDP-diacylglycerol: step 2/2. Its function is as follows. Catalyzes the formation of phosphatidylethanolamine (PtdEtn) from phosphatidylserine (PtdSer). The sequence is that of Phosphatidylserine decarboxylase proenzyme from Geotalea daltonii (strain DSM 22248 / JCM 15807 / FRC-32) (Geobacter daltonii).